The primary structure comprises 1087 residues: A-kinase anchor protein 9 (1087 aa).

Residues 5-461 (EVQCQAEKVR…REREKMERIQ (457 aa)) are a coiled coil. The PKA-RII subunit binding domain stretch occupies residues 559-572 (SLQKVLEEKVAAAL). A coiled-coil region spans residues 614–773 (MESDVSALTW…SEKEDKTEVQ (160 aa)). The span at 667–685 (VQDSETKQRERERQSRLHG) shows a compositional bias: basic and acidic residues. A disordered region spans residues 667 to 691 (VQDSETKQRERERQSRLHGDLGVLE).

Interacts with the regulatory region of protein kinase N (PKN), protein phosphatase 2A (PP2A), protein phosphatase 1 (PP1) and the immature non-phosphorylated form of PKC epsilon. Interacts with CIP4 and FNBP1. Interacts with chloride intracellular channel proteins CLIC1, CLIC4 and CLIC5. CSNK1D binding promotes its centrosomal subcellular location. Interacts with GM130/GOLGA2; leading to recruitment to the Golgi apparatus. Interacts with KCNQ1; targets protein kinase A (PKA) catalytic and regulatory subunits and protein phosphatase 1 (PP1), to the heterodimer KCNQ1-KCNE1. Interacts with PDE4DIP; this interaction stabilizes both proteins. In complex with PDE4DIP, recruits CAMSAP2 to the Golgi apparatus. Forms a pericentrosomal complex with CDK5RAP2, EB1/MAPRE1 and PDE4DIP; within this complex, MAPRE1 binding to CDK5RAP2 may be mediated by PDE4DIP. The interaction with PDE4DIP is isoform-specific. Interacts with MAPRE1 and MAPRE3. Interacts (via C-terminus) with CAMSAP2; this interaction is much stronger in the presence of PDE4DIP. Interacts with CAMSAP3. Interacts (via C-terminus) with the gamma-tubulin ring complex (gamma-TuRC), composed of gamma-tubulin, TUBGCP2, TUBGCP3, TUBGCP4, TUBGCP5 and TUBGCP6. Highly expressed in gastric parietal cells.

It is found in the golgi apparatus. Its subcellular location is the cytoplasm. It localises to the cytoskeleton. The protein resides in the microtubule organizing center. The protein localises to the centrosome. In terms of biological role, scaffolding protein that assembles several protein kinases and phosphatases on the centrosome and Golgi apparatus. Required to maintain the integrity of the Golgi apparatus. Required for microtubule nucleation at the cis-side of the Golgi apparatus. Required for association of the centrosomes with the poles of the bipolar mitotic spindle during metaphase. In complex with PDE4DIP, recruits CAMSAP2 to the Golgi apparatus and tethers non-centrosomal minus-end microtubules to the Golgi, an important step for polarized cell movement. In complex with PDE4DIP, EB1/MAPRE1 and CDK5RAP2, contributes to microtubules nucleation and extension also from the centrosome to the cell periphery. The interaction with PDE4DIP is isoform-specific. The protein is A-kinase anchor protein 9 (AKAP9) of Oryctolagus cuniculus (Rabbit).